An 86-amino-acid polypeptide reads, in one-letter code: Kappa-theraphotoxin-Cg1a 2 (86 aa).

The signal sequence occupies residues 1–21 (MKVSVVITLAVLGVMFVWASA). Residues 22 to 50 (AELEERGSDQRDSPAWLKSMERIFQSEER) constitute a propeptide that is removed on maturation. Cystine bridges form between cysteine 52–cysteine 66, cysteine 59–cysteine 71, and cysteine 65–cysteine 78. Phenylalanine 84 carries the post-translational modification Phenylalanine amide.

The protein belongs to the neurotoxin 10 (Hwtx-1) family. 28 (Jztx-11) subfamily. Expressed by the venom gland.

It localises to the secreted. Functionally, this toxin acts as a voltage-dependent gating-modifier. It inhibits the sodium conductance (IC(50)=124 nM) and slows the fast inactivation (EC(50)=1180 nM) of Nav1.5/SCN5A. It significantly shifts the activation to more depolarized voltages and decreases the deactivation of Nav1.5 currents upon extreme depolarization, but only slightly affects voltage-dependence of steady-state inactivation. In addition, this toxin causes an approximately five-fold decrease in the rate of recovery from inactivation and an approximately 1.9-fold reduction in the closed-state inactivation rate. This toxin integrates the functions of site 3 toxins (alpha-scorpion toxins) with site 4 toxins (beta-scorpion and spider toxins) by targeting multiple sites on Nav1.5. Also shows inhibition of voltage-gated potassium channels (5 uM completely inhibits Kv2.1/KCNB1, whereas 5 uM moderately inhibits Kv4.2/KCND2 Kv4.1/KCND1 channels). This is Kappa-theraphotoxin-Cg1a 2 from Chilobrachys guangxiensis (Chinese earth tiger tarantula).